Consider the following 526-residue polypeptide: MLO-like protein 1 (526 aa).

Residues 1–11 (MGHGGEGMSLE) are Extracellular-facing. A helical membrane pass occupies residues 12 to 32 (FTPTWVVAGVCTVIVAISLAV). At 33-61 (ERLLHYFGTVLKKKKQKPLYEALQKVKEE) the chain is on the cytoplasmic side. The chain crosses the membrane as a helical span at residues 62–82 (LMLLGFISLLLTVFQGLISKF). Over 83 to 160 (CVKENVLMHM…LSLEALHHLH (78 aa)) the chain is Extracellular. The helical transmembrane segment at 161–181 (IFIFVLAISHVTFCVLTVIFG) threads the bilayer. Over 182 to 287 (STRIHQWKKW…MRALEDDFKQ (106 aa)) the chain is Cytoplasmic. Transmembrane regions (helical) follow at residues 288-308 (VVGI…LNVN) and 309-329 (GWHT…AVGT). The Cytoplasmic segment spans residues 330-372 (KLEHVIAQLAHEVAEKHVAIEGDLVVKPSDEHFWFSKPQIVLY). Residues 373–393 (LIHFILFQNAFEIAFFFWIWV) form a helical membrane-spanning segment. Topologically, residues 394–412 (TYGFDSCIMGQVRYIVPRL) are extracellular. The helical transmembrane segment at 413–433 (VIGVFIQVLCSYSTLPLYAIV) threads the bilayer. Residues 434-526 (SQMGSSFKKA…NNEITPDHNN (93 aa)) lie on the Cytoplasmic side of the membrane. The tract at residues 447–468 (ENVQVGLVGWAQKVKQKRDLKA) is calmodulin-binding. A disordered region spans residues 471–526 (SNGDEGSSQAGPGPDSGSGSAPAAGPGAGFAGIQLSRVTRNNAGDTNNEITPDHNN). Over residues 476 to 495 (GSSQAGPGPDSGSGSAPAAG) the composition is skewed to low complexity. Positions 506–520 (SRVTRNNAGDTNNEI) are enriched in polar residues.

The protein belongs to the MLO family.

The protein localises to the cell membrane. In terms of biological role, may be involved in modulation of pathogen defense and leaf cell death. Activity seems to be regulated by Ca(2+)-dependent calmodulin binding and seems not to require heterotrimeric G proteins. The chain is MLO-like protein 1 (MLO1) from Arabidopsis thaliana (Mouse-ear cress).